A 159-amino-acid chain; its full sequence is MKLTTMIKTAVAVVAMAAIATFAAPVALAAYPITGKLGSELTMTDTVGQVVLGWKVSDLKSSTAVIPGYPVAGQVWEATATVNAIRGSVTPAVSQFNARTADGINYRVLWQAAGPDTISGATIPQGEQSTGKIYFDVTGPSPTIVAMNNGMEDLLIWEP.

The first 29 residues, 1–29 (MKLTTMIKTAVAVVAMAAIATFAAPVALA), serve as a signal peptide directing secretion.

The protein localises to the secreted. The sequence is that of Immunogenic protein MPB63 (mpb63) from Mycobacterium bovis (strain ATCC BAA-935 / AF2122/97).